Reading from the N-terminus, the 384-residue chain is Chaperone protein DnaJ (384 aa).

A J domain is found at 5–69 (DYYKVLGVDR…QKRAQYDQFG (65 aa)). A CR-type zinc finger spans residues 141-223 (GKKTQVSYTR…CGGKGTVERK (83 aa)). Positions 154, 157, 171, 174, 197, 200, 211, and 214 each coordinate Zn(2+). CXXCXGXG motif repeat units follow at residues 154 to 161 (CETCGGNG), 171 to 178 (CDKCHGTG), 197 to 204 (CDKCNGRG), and 211 to 218 (CKTCGGKG).

The protein belongs to the DnaJ family. As to quaternary structure, homodimer. Requires Zn(2+) as cofactor.

It is found in the cytoplasm. In terms of biological role, participates actively in the response to hyperosmotic and heat shock by preventing the aggregation of stress-denatured proteins and by disaggregating proteins, also in an autonomous, DnaK-independent fashion. Unfolded proteins bind initially to DnaJ; upon interaction with the DnaJ-bound protein, DnaK hydrolyzes its bound ATP, resulting in the formation of a stable complex. GrpE releases ADP from DnaK; ATP binding to DnaK triggers the release of the substrate protein, thus completing the reaction cycle. Several rounds of ATP-dependent interactions between DnaJ, DnaK and GrpE are required for fully efficient folding. Also involved, together with DnaK and GrpE, in the DNA replication of plasmids through activation of initiation proteins. This is Chaperone protein DnaJ from Lactobacillus acidophilus (strain ATCC 700396 / NCK56 / N2 / NCFM).